The primary structure comprises 777 residues: Glucocorticoid receptor (777 aa).

The segment covering 1–14 (MDSKESLTPGKEEN) has biased composition (basic and acidic residues). The tract at residues 1 to 23 (MDSKESLTPGKEENPSSVLTQER) is disordered. Residues 1–420 (MDSKESLTPG…TATTGPPPKL (420 aa)) form a modulating region. Thr-8 bears the Phosphothreonine mark. Arg-23 carries the omega-N-methylarginine modification. Phosphoserine is present on residues Ser-45, Ser-113, Ser-134, and Ser-141. The disordered stretch occupies residues 130–182 (NRSTSVPENPKSSASSSVSAAPKEKEFPKTHSDVSSEQQNLKGQTGTNGGNVK). Positions 134 to 150 (SVPENPKSSASSSVSAA) are enriched in low complexity. Residues 151 to 163 (PKEKEFPKTHSDV) show a composition bias toward basic and acidic residues. The segment covering 164–174 (SSEQQNLKGQT) has biased composition (polar residues). Phosphoserine occurs at positions 203, 211, and 226. Lys-258 participates in a covalent cross-link: Glycyl lysine isopeptide (Lys-Gly) (interchain with G-Cter in SUMO2). Ser-267 bears the Phosphoserine mark. Residues Lys-277 and Lys-293 each participate in a glycyl lysine isopeptide (Lys-Gly) (interchain with G-Cter in SUMO); alternate cross-link. Residues Lys-277 and Lys-293 each participate in a glycyl lysine isopeptide (Lys-Gly) (interchain with G-Cter in SUMO2); alternate cross-link. Low complexity predominate over residues 394-414 (SSPSMRPDVSSPPSSSSTATT). Residues 394 to 415 (SSPSMRPDVSSPPSSSSTATTG) are disordered. Position 404 is a phosphoserine (Ser-404). Residue Lys-419 forms a Glycyl lysine isopeptide (Lys-Gly) (interchain with G-Cter in ubiquitin) linkage. 2 consecutive NR C4-type zinc fingers follow at residues 421 to 441 (CLVC…CGSC) and 457 to 481 (CAGR…YRKC). Residues 421-486 (CLVCSDEASG…RYRKCLQAGM (66 aa)) constitute a DNA-binding region (nuclear receptor). Residues Lys-480, Lys-492, Lys-494, and Lys-495 each carry the N6-acetyllysine modification. The interaction with CLOCK stretch occupies residues 485-777 (GMNLEARKTK…NIKKLLFHQK (293 aa)). The tract at residues 487–523 (NLEARKTKKKIKGIQQATTGVSQETSENPANKTIVPA) is hinge. Residues 524 to 758 (TLPQLTPTLV…FPEMLAEIIT (235 aa)) enclose the NR LBD domain. The segment at 532 to 697 (LVSLLEVIEP…EIRMTYIKEL (166 aa)) is interaction with CRY1. A Glycyl lysine isopeptide (Lys-Gly) (interchain with G-Cter in SUMO) cross-link involves residue Lys-703.

Belongs to the nuclear hormone receptor family. NR3 subfamily. Heteromultimeric cytoplasmic complex with HSP90AA1, HSPA1A/HSPA1B, and FKBP5 or another immunophilin such as PPID, STIP1, or the immunophilin homolog PPP5C. Upon ligand binding FKBP5 dissociates from the complex and FKBP4 takes its place, thereby linking the complex to dynein and mediating transport to the nucleus, where the complex dissociates. Probably forms a complex composed of chaperones HSP90 and HSP70, co-chaperones CDC37, PPP5C, TSC1 and client protein TSC2, CDK4, AKT, RAF1 and NR3C1; this complex does not contain co-chaperones STIP1/HOP and PTGES3/p23. Directly interacts with UNC45A. Binds to DNA as a homodimer, and as heterodimer with NR3C2 or the retinoid X receptor. Binds STAT5A and STAT5B homodimers and heterodimers. Interacts with NRIP1, POU2F1, POU2F2 and TRIM28. Interacts with several coactivator complexes, including the SMARCA4 complex, CREBBP/EP300, TADA2L (Ada complex) and p160 coactivators such as NCOA2 and NCOA6. Interaction with BAG1 inhibits transactivation. Interacts with HEXIM1 and TGFB1I1. Interacts with NCOA1. Interacts with NCOA3, SMARCA4, SMARCC1, SMARCD1, and SMARCE1. Interacts with CLOCK, CRY1 and CRY2 in a ligand-dependent fashion. Interacts with CIART. Interacts with RWDD3. Interacts with UBE2I/UBC9 and this interaction is enhanced in the presence of RWDD3. Interacts with GRIP1. Interacts with NR4A3 (via nuclear receptor DNA-binding domain), represses transcription activity of NR4A3 on the POMC promoter Nur response element (NurRE). Directly interacts with PNRC2 to attract and form a complex with UPF1 and DCP1A; the interaction leads to rapid mRNA degradation. Interacts with GSK3B. Interacts with FNIP1 and FNIP2. Interacts (via C-terminus) with HNRNPU (via C-terminus). Interacts with MCM3AP. Interacts (via domain NR LBD) with HSP90AA1 and HSP90AB1. In the absence of hormonal ligand, interacts with TACC1. Interacts (via NR LBD domain) with ZNF764 (via KRAB domain); the interaction regulates transcription factor activity of NR3C1 by directing its actions toward certain biologic pathways. In terms of processing, acetylation by CLOCK reduces its binding to glucocorticoid response elements and its transcriptional activity. Post-translationally, increased proteasome-mediated degradation in response to glucocorticoids. Phosphorylated in the absence of hormone; becomes hyperphosphorylated in the presence of glucocorticoid. The Ser-203, Ser-226 and Ser-404-phosphorylated forms are mainly cytoplasmic, and the Ser-211-phosphorylated form is nuclear. Phosphorylation at Ser-211 increases transcriptional activity. Phosphorylation at Ser-203, Ser-226 and Ser-404 decreases signaling capacity. Phosphorylation at Ser-404 may protect from glucocorticoid-induced apoptosis. Phosphorylation at Ser-203 and Ser-211 is not required in regulation of chromosome segregation. May be dephosphorylated by PPP5C, attenuates NR3C1 action. In terms of processing, ubiquitinated by UBR5, leading to its degradation: UBR5 specifically recognizes and binds ligand-bound NR3C1 when it is not associated with coactivators (NCOAs). In presence of NCOAs, the UBR5-degron is not accessible, preventing its ubiquitination and degradation. Post-translationally, sumoylation at Lys-277 and Lys-293 negatively regulates its transcriptional activity. Sumoylation at Lys-703 positively regulates its transcriptional activity in the presence of RWDD3. Sumoylation at Lys-277 and Lys-293 is dispensable whereas sumoylation at Lys-703 is critical for the stimulatory effect of RWDD3 on its transcriptional activity. Heat shock increases sumoylation in a RWWD3-dependent manner.

The protein resides in the cytoplasm. It is found in the nucleus. Its subcellular location is the mitochondrion. The protein localises to the cytoskeleton. It localises to the spindle. The protein resides in the microtubule organizing center. It is found in the centrosome. Its subcellular location is the chromosome. The protein localises to the nucleoplasm. Its function is as follows. Receptor for glucocorticoids (GC). Has a dual mode of action: as a transcription factor that binds to glucocorticoid response elements (GRE), both for nuclear and mitochondrial DNA, and as a modulator of other transcription factors. Affects inflammatory responses, cellular proliferation and differentiation in target tissues. Involved in chromatin remodeling. Plays a role in rapid mRNA degradation by binding to the 5' UTR of target mRNAs and interacting with PNRC2 in a ligand-dependent manner which recruits the RNA helicase UPF1 and the mRNA-decapping enzyme DCP1A, leading to RNA decay. Could act as a coactivator for STAT5-dependent transcription upon growth hormone (GH) stimulation and could reveal an essential role of hepatic GR in the control of body growth. Mediates glucocorticoid-induced apoptosis. Promotes accurate chromosome segregation during mitosis. May act as a tumor suppressor. May play a negative role in adipogenesis through the regulation of lipolytic and antilipogenic gene expression. The polypeptide is Glucocorticoid receptor (NR3C1) (Aotus nancymaae (Ma's night monkey)).